Reading from the N-terminus, the 286-residue chain is MHRLTLPAPAKLNLWLHIIGRRPDGYHELETVFQFLDHGDELTFALREDGAIRLHTEIEAVPHDSNLIVRAARRLQEQSGTGLGADIWLTKVLPMGGGIGGGSSDAATTLLALAHLWQLDWDEDRLAALGLTLGADVPVFVRGHAAFAQGVGEQLTPVDPAEPWYVVLVPQVSVSTVEIFSHPQLTRDSLPLKMRPVPEGNSRNDCQPVVEQSYPEVRNALNSLGKFTEARLTGTGSCVFGAFPSKAEADKVLALLSATQTGFVAKGSNVSMLHRKLQSLVKKSSA.

K11 is a catalytic residue. 94–104 (PMGGGIGGGSS) contributes to the ATP binding site. The active site involves D136.

It belongs to the GHMP kinase family. IspE subfamily.

It catalyses the reaction 4-CDP-2-C-methyl-D-erythritol + ATP = 4-CDP-2-C-methyl-D-erythritol 2-phosphate + ADP + H(+). It functions in the pathway isoprenoid biosynthesis; isopentenyl diphosphate biosynthesis via DXP pathway; isopentenyl diphosphate from 1-deoxy-D-xylulose 5-phosphate: step 3/6. Catalyzes the phosphorylation of the position 2 hydroxy group of 4-diphosphocytidyl-2C-methyl-D-erythritol. In Pseudomonas putida (strain W619), this protein is 4-diphosphocytidyl-2-C-methyl-D-erythritol kinase.